Consider the following 87-residue polypeptide: MANIKSAQKRIKVIAKKTARNRMIKSQLKTAIKRFEEAVEAGNLEEAKVKLTFVEKKLSQAAAKGTVHKSSASRKISRLAIRLNKAI.

This sequence belongs to the bacterial ribosomal protein bS20 family.

Its function is as follows. Binds directly to 16S ribosomal RNA. This is Small ribosomal subunit protein bS20 from Alkaliphilus metalliredigens (strain QYMF).